The following is a 62-amino-acid chain: Large ribosomal subunit protein bL28 (62 aa).

Residues 1-26 are disordered; sequence MARKCYVTGKSPKSGNNRSHALNKTK. Over residues 11 to 20 the composition is skewed to polar residues; that stretch reads SPKSGNNRSH.

This sequence belongs to the bacterial ribosomal protein bL28 family.

This is Large ribosomal subunit protein bL28 from Exiguobacterium sibiricum (strain DSM 17290 / CCUG 55495 / CIP 109462 / JCM 13490 / 255-15).